Consider the following 377-residue polypeptide: Glutamate 5-kinase (377 aa).

ATP is bound at residue lysine 15. Residues serine 56, aspartate 143, and asparagine 155 each contribute to the substrate site. 175-176 (SD) serves as a coordination point for ATP. Residues 281 to 358 (KGTLTIDAGA…PDVLIILGIS (78 aa)) enclose the PUA domain.

This sequence belongs to the glutamate 5-kinase family.

The protein resides in the cytoplasm. The enzyme catalyses L-glutamate + ATP = L-glutamyl 5-phosphate + ADP. The protein operates within amino-acid biosynthesis; L-proline biosynthesis; L-glutamate 5-semialdehyde from L-glutamate: step 1/2. Its function is as follows. Catalyzes the transfer of a phosphate group to glutamate to form L-glutamate 5-phosphate. The sequence is that of Glutamate 5-kinase from Rhodopseudomonas palustris (strain BisA53).